The primary structure comprises 73 residues: Crustacean hyperglycemic hormone (73 aa).

3 cysteine pairs are disulfide-bonded: Cys7/Cys43, Cys23/Cys39, and Cys26/Cys52. At Ser73 the chain carries Serine amide.

In terms of tissue distribution, produced by the medulla terminalis X-organ in the eyestalks and transported to the sinus gland where they are stored and released. Found also in the brain; in the neuroendocrine structures of the protocerebrum.

The protein localises to the secreted. Its function is as follows. Hormone found in the sinus gland of isopods and decapods which controls the blood sugar level. Has a secretagogue action over the amylase released from the midgut gland. May act as a stress hormone and may be involved in the control of molting and reproduction. The chain is Crustacean hyperglycemic hormone from Armadillidium vulgare (Pillbug).